The following is a 206-amino-acid chain: High frequency lysogenization protein HflD homolog (206 aa).

It belongs to the HflD family.

It is found in the cytoplasm. Its subcellular location is the cell inner membrane. This chain is High frequency lysogenization protein HflD homolog, found in Idiomarina loihiensis (strain ATCC BAA-735 / DSM 15497 / L2-TR).